The primary structure comprises 224 residues: Heme response regulator HssR (224 aa).

The 114-residue stretch at 3-116 (NCLIVDDDKK…ELLFRIKAVL (114 aa)) folds into the Response regulatory domain. A 4-aspartylphosphate modification is found at aspartate 52. A DNA-binding region (ompR/PhoB-type) is located at residues 124 to 222 (DNELQLGNLI…VRGQGYRVDQ (99 aa)).

Post-translationally, phosphorylated by HssS.

It localises to the cytoplasm. Functionally, member of the two-component regulatory system HssS/HssR involved in intracellular heme homeostasis and tempering of staphylococcal virulence. Phosphorylated HssR binds to a direct repeat sequence within hrtAB promoter and activates the expression of hrtAB, an efflux pump, in response to extracellular heme, hemin, hemoglobin or blood. The chain is Heme response regulator HssR (hssR) from Staphylococcus epidermidis (strain ATCC 35984 / DSM 28319 / BCRC 17069 / CCUG 31568 / BM 3577 / RP62A).